Here is a 1445-residue protein sequence, read N- to C-terminus: Spermatogenesis-associated protein 31E1 (1445 aa).

Residues 64 to 84 (WMMDFILTSVCGLVLLFLLLL) traverse the membrane as a helical segment. Disordered stretches follow at residues 90 to 115 (PPSPPPGRKRSSREPQRERSGRSRSR) and 169 to 262 (VPAK…PDSS). The span at 101 to 110 (SREPQRERSG) shows a compositional bias: basic and acidic residues. Residues 241–260 (VFPPSPQPHGPLASSPPPPD) are compositionally biased toward pro residues. Asn408 carries N-linked (GlcNAc...) asparagine glycosylation. Disordered regions lie at residues 411–430 (TQPQQLPRPQQVSDATTVGN), 460–557 (NPSS…ERTQ), 592–619 (LSQPTAHLPQERPASWSPKSAPILPGVV), and 637–761 (QEQS…KEHL). Residues 664-681 (PQSQAEDTQQALLPSQPS) are compositionally biased toward polar residues. Asn819, Asn906, and Asn1160 each carry an N-linked (GlcNAc...) asparagine glycan. Disordered regions lie at residues 894–966 (FLGK…TCSL), 1143–1242 (RLPT…IGDK), 1254–1280 (KGQTPPESHFQRKISHHPQGLHPRKGG), and 1378–1445 (SPKA…CLAS). Composition is skewed to polar residues over residues 906 to 915 (NRTTSKSVPT) and 1148 to 1165 (APLSTSQSVSGKNMTASQ). A compositionally biased stretch (basic and acidic residues) spans 1202–1217 (DKGEAHRRPRTGEQGH).

The protein belongs to the SPATA31 family.

It is found in the membrane. In terms of biological role, may play a role in spermatogenesis. In Homo sapiens (Human), this protein is Spermatogenesis-associated protein 31E1 (SPATA31E1).